The following is a 449-amino-acid chain: Methionine aminopeptidase 2-2 (449 aa).

The interval 1 to 91 (MAAQAAPELA…PRIPLTTLFP (91 aa)) is disordered. A compositionally biased stretch (polar residues) spans 15 to 28 (NKNTGSAEASTVPA). Acidic residues predominate over residues 34 to 50 (DDAENEGDSDDDRDDEQ). The segment covering 61-75 (KKKKKKRPKKKKKTA) has biased composition (basic residues). H199 lines the substrate pocket. Positions 219, 230, and 299 each coordinate a divalent metal cation. H307 is a substrate binding site. A divalent metal cation is bound by residues E335 and E430.

It belongs to the peptidase M24A family. Methionine aminopeptidase eukaryotic type 2 subfamily. Co(2+) is required as a cofactor. Zn(2+) serves as cofactor. It depends on Mn(2+) as a cofactor. The cofactor is Fe(2+).

The protein localises to the cytoplasm. The catalysed reaction is Release of N-terminal amino acids, preferentially methionine, from peptides and arylamides.. Functionally, cotranslationally removes the N-terminal methionine from nascent proteins. The N-terminal methionine is often cleaved when the second residue in the primary sequence is small and uncharged (Met-Ala-, Cys, Gly, Pro, Ser, Thr, or Val). The polypeptide is Methionine aminopeptidase 2-2 (Arthroderma gypseum (strain ATCC MYA-4604 / CBS 118893) (Microsporum gypseum)).